The primary structure comprises 207 residues: Protein phosphatase inhibitor 2 (207 aa).

Disordered regions lie at residues 1–44 (MAAS…SKKS), 65–97 (LMKIDEPSTPYHSMVADDEDALSDSETTEALTP), and 110–146 (ESLEPKYRVREQESSGDEDSDLSPEEREKKRQFEMKR). A2 carries the post-translational modification N-acetylalanine. Positions 12–17 (KGILKN) are required for binding PPP1CC. Residues 19–28 (SSTTSSVVST) show a composition bias toward low complexity. The segment covering 35–44 (SVDEELSKKS) has biased composition (basic and acidic residues). Residues 43-55 (KSQKWDEMSILAT) are required for binding PPP1CC. A Phosphoserine; by ATM modification is found at S44. At T73 the chain carries Phosphothreonine; by GSK3. Positions 80-91 (ADDEDALSDSET) are enriched in acidic residues. Phosphoserine occurs at positions 87 and 89. Phosphothreonine is present on residues T92 and T96. A compositionally biased stretch (basic and acidic residues) spans 112-122 (LEPKYRVREQE). S123, S124, S129, and S132 each carry phosphoserine. The span at 123–132 (SSGDEDSDLS) shows a compositional bias: acidic residues. Positions 133 to 145 (PEEREKKRQFEMK) are enriched in basic and acidic residues. The interval 149 to 152 (HYNE) is required for binding PPP1CC catalytic center, displacing metal ions and inhibition of PPP1CC catalytic activity. The interval 165–207 (KDLNDEEEDEEMSETAAGESMNMEESSQGSATSDQLQNKSQSS) is disordered. Residues 168–177 (NDEEEDEEMS) show a composition bias toward acidic residues. The segment covering 187 to 207 (MEESSQGSATSDQLQNKSQSS) has biased composition (polar residues).

The protein belongs to the protein phosphatase inhibitor 2 family. In terms of assembly, heterodimer with PP1. Post-translationally, phosphorylation on Ser-44 by ATM activates PP1 by dissociating the PP1-PPP1R2 complex. Phosphorylation on Thr-73 by GSK3 activates PP1 by dissociating the PP1-PPP1R2 complex.

Functionally, inhibitor of protein-phosphatase 1. The protein is Protein phosphatase inhibitor 2 (PPP1R2) of Bos taurus (Bovine).